We begin with the raw amino-acid sequence, 180 residues long: Glycodelin (180 aa).

A signal peptide spans 1 to 18 (MLCLLLTLGVALVCGVPA). N46 and N81 each carry an N-linked (GlcNAc...) (complex) asparagine glycan. Cystine bridges form between C84–C178 and C124–C137.

This sequence belongs to the calycin superfamily. Lipocalin family. Homodimer. In terms of processing, four distinct glycoforms A, C, F and S arise from different N-linked oligosaccharide chains at amino acid residues Asn-46 and Asn-81. Glycodelin-A and -F are taken up by the cumulus cells in which partial deglycosylation takes place to produce glycodelin-C. This protein is, the main protein synthesized and secreted in the endometrium from mid-luteal phase of the menstrual cycle and during the first semester of pregnancy. Glycodelin-A is expressed in amniotic fluid, endometrium/decidua and maternal serum (at protein level). Glycodelin-F is expressed in follicular fluid, luteinized granulosa cells and the oviduct (at protein level). Glycodelin-S is expressed in seminal plasma and seminal vesicles (at protein level). Glycodelin-C is detected in cumulus cells (at protein level), but cumulus cells do not synthesize Glycodelin-C but take up and convert glycodelin-A and -F vis glycan remodeling.

Its subcellular location is the secreted. In terms of biological role, glycoprotein that regulates critical steps during fertilization and also has immunomonomodulatory effects. Four glycoforms, namely glycodelin-S, -A, -F and -C have been identified in reproductive tissues that differ in glycosylation and biological activity. Glycodelin-A has contraceptive and immunosuppressive activities. Glycodelin-C stimulates binding of spermatozoa to the zona pellucida. Glycodelin-F inhibits spermatozoa-zona pellucida binding and significantly suppresses progesterone-induced acrosome reaction of spermatozoa. Glycodelin-S in seminal plasma maintains the uncapacitated state of human spermatozoa. This chain is Glycodelin (PAEP), found in Homo sapiens (Human).